Reading from the N-terminus, the 486-residue chain is Pentatricopeptide repeat-containing protein At3g06430, chloroplastic (486 aa).

A chloroplast-targeting transit peptide spans 1–36; the sequence is MASMSLSFSSSLCSSRIPEGKRRFRHRDVGIVRCVL. PPR repeat units follow at residues 123-157, 158-188, 194-228, 229-264, 265-299, 300-334, 335-369, 370-404, 405-439, and 440-470; these read KEGT…GLEP, TVEL…MKSF, DVFT…LITP, NTVT…ACKP, DVWT…GIEP, ETRT…EFPW, TTST…GMKA, DTKT…EIPE, NTAF…QCVC, and DSRT…RQKL.

Belongs to the PPR family. P subfamily.

It localises to the plastid. Its subcellular location is the chloroplast. This Arabidopsis thaliana (Mouse-ear cress) protein is Pentatricopeptide repeat-containing protein At3g06430, chloroplastic (EMB2750).